A 765-amino-acid chain; its full sequence is MEETKTHELEVEAESGSRMEKVYIAVGNDVQEGYKTIHWALKKWNNIPISIVLLHLCNISQDFVYTPFGKLPASSVSEEKLQVLRKYEDQKIDKLLSKYITFCGKVCPLSVNFVLFGKSKSAISGSFYVYQNKPEFCEFYIICGGKMVSLKNDVNNNNSNIRSWIGKMFHDPGRNLDRSSGNNDDPTASGSSWDKNLQEIENYFQQLLSLNLAEEETENVVEEEQEDDDDVALNVLQHMDVAEKLEYVRRKVNEAKLMIDEKSREVKVNAERSNRAEWAISLCNSRIGEFEAWIKEESERREKLQATLDSDKECIEEAKNYVEKGKTKLHSLAELQEVLSSKVKTMMEAKSQAEVELERVVLQRGEMITEIEKLRSQRDVFNRRIEFCKEREVIGSVSKEEVKCGYREYVAEDIRLATETYSDRLRLKSGGNWTNVYRGRIKHTTVAVKVIGDSLSDEAFGAKVKLLNEIRHPNLVAIAGFCSQRPKCLLFEYMHNGNLRDNLFTSQRKSRRSKILKWHDRIRIAHQVCSGLGFLHSVKPKPIVHGRLTPSKILLDRNLVPKITGFGLIMHSDQSDTKPDVMAFGVLLLHLLTGRNWHGLLKAMSMNQTSILRDLDQTAGKWPLELAKEFGALAVKCSSVNRGGNMDFSTKEIMEELGKIREKADEFKTKGGYEEATNSNMDEGDPNDIPSVFMCPILQEVMKNPHVAADGFSYELEAIQEWLSMGHDTSPMTNLRLDYQMLTPNHTLRSLIQDWHSKRAAQASS.

Positions 198 to 391 (QEIENYFQQL…NRRIEFCKER (194 aa)) form a coiled coil. A Protein kinase domain is found at 422 to 765 (SDRLRLKSGG…HSKRAAQASS (344 aa)). ATP-binding positions include 428–436 (KSGGNWTNV) and Lys-449. Positions 688–762 (DIPSVFMCPI…QDWHSKRAAQ (75 aa)) constitute a U-box domain.

It belongs to the protein kinase superfamily. Ser/Thr protein kinase family.

The enzyme catalyses S-ubiquitinyl-[E2 ubiquitin-conjugating enzyme]-L-cysteine + [acceptor protein]-L-lysine = [E2 ubiquitin-conjugating enzyme]-L-cysteine + N(6)-ubiquitinyl-[acceptor protein]-L-lysine.. Its pathway is protein modification; protein ubiquitination. In terms of biological role, functions as an E3 ubiquitin ligase. This chain is Putative U-box domain-containing protein 50 (PUB50), found in Arabidopsis thaliana (Mouse-ear cress).